A 433-amino-acid chain; its full sequence is Glutamate-1-semialdehyde 2,1-aminomutase (433 aa).

K271 is subject to N6-(pyridoxal phosphate)lysine.

The protein belongs to the class-III pyridoxal-phosphate-dependent aminotransferase family. HemL subfamily. In terms of assembly, homodimer. Requires pyridoxal 5'-phosphate as cofactor.

Its subcellular location is the cytoplasm. The enzyme catalyses (S)-4-amino-5-oxopentanoate = 5-aminolevulinate. Its pathway is porphyrin-containing compound metabolism; protoporphyrin-IX biosynthesis; 5-aminolevulinate from L-glutamyl-tRNA(Glu): step 2/2. The protein operates within porphyrin-containing compound metabolism; chlorophyll biosynthesis. The sequence is that of Glutamate-1-semialdehyde 2,1-aminomutase from Prochlorococcus marinus (strain MIT 9515).